The chain runs to 96 residues: Neutrophil defensin 1 (96 aa).

A signal peptide spans 1–19 (MRTLVILAAILLVALQAQA). Positions 20 to 66 (EPLQARTDEATAAQEQIPTDNPEVVVSLAWDESLAPKDSVPGLRKNM) are excised as a propeptide. Cystine bridges form between C68–C96, C70–C85, and C75–C95. Y87 is subject to Phosphotyrosine.

Tetramer. Dimer. Interacts with RETN. In terms of processing, ADP-ribosylation drastically reduces cytotoxic and antibacterial activities, and enhances IL8 production.

The protein localises to the secreted. Its function is as follows. Effector molecule of the innate immune system that acts via antibiotic-like properties against a broad array of infectious agents including bacteria, fungi, and viruses or by promoting the activation and maturation of some APCs. Interacts with the essential precursor of cell wall synthesis lipid II to inhibit bacterial cell wall synthesis. Inhibits adenovirus infection via inhibition of viral disassembly at the vertex region, thereby restricting the release of internal capsid protein pVI, which is required for endosomal membrane penetration during cell entry. In addition, interaction with adenovirus capsid leads to the redirection of viral particles to TLR4 thereby promoting a NLRP3-mediated inflammasome response and interleukin 1-beta (IL-1beta) release. Induces the production of proinflammatory cytokines including type I interferon (IFN) in plasmacytoid dendritic cells (pDCs) by triggering the degradation of NFKBIA and nuclear translocation of IRF1, both of which are required for activation of pDCs. This is Neutrophil defensin 1 from Macaca mulatta (Rhesus macaque).